Consider the following 441-residue polypeptide: Xylose isomerase (441 aa).

Residues histidine 99 and aspartate 102 contribute to the active site. Positions 230, 266, 294, 305, 307, and 337 each coordinate Mn(2+).

Belongs to the xylose isomerase family. In terms of assembly, homotetramer. The cofactor is Mn(2+).

Its subcellular location is the cytoplasm. The enzyme catalyses alpha-D-xylose = alpha-D-xylulofuranose. In Geobacillus stearothermophilus (Bacillus stearothermophilus), this protein is Xylose isomerase (xylA).